The sequence spans 108 residues: Parvalbumin beta (108 aa).

2 consecutive EF-hand domains span residues 38–73 (KSTD…FSST) and 77–108 (LTAA…LVKA). Ca(2+) is bound by residues Asp51, Asp53, Ser55, Phe57, Glu59, Glu62, Asp90, Asp92, Asp94, Lys96, and Glu101.

The protein belongs to the parvalbumin family.

In terms of biological role, in muscle, parvalbumin is thought to be involved in relaxation after contraction. It binds two calcium ions. This Graptemys geographica (Common map turtle) protein is Parvalbumin beta.